We begin with the raw amino-acid sequence, 20 residues long: Citrate synthase (20 aa).

Belongs to the citrate synthase family. In terms of assembly, homodimer.

The catalysed reaction is oxaloacetate + acetyl-CoA + H2O = citrate + CoA + H(+). Its pathway is carbohydrate metabolism; tricarboxylic acid cycle; isocitrate from oxaloacetate: step 1/2. This is Citrate synthase from Populus euphratica (Euphrates poplar).